The following is a 461-amino-acid chain: Argininosuccinate lyase (461 aa).

Belongs to the lyase 1 family. Argininosuccinate lyase subfamily.

It is found in the cytoplasm. The enzyme catalyses 2-(N(omega)-L-arginino)succinate = fumarate + L-arginine. It participates in amino-acid biosynthesis; L-arginine biosynthesis; L-arginine from L-ornithine and carbamoyl phosphate: step 3/3. With respect to regulation, strongly inhibited by L-arginine. Inhibitory effects are lowered at pH 7.0 compared to those at pH 8.0. At 45 degrees Celsius and pH 8.0, activity decreases to 94%, 74% and 37% in the presence of 0.6 mM, 2.8 mM and 10 mM arginine, respectively. Activity also decreases to 86% in the presence of 10 mM sodium succinate or sodium citrate. Activity does not decrease in the presence of 1 mM or 10 mM L-lysine, which has a similar structure to arginine. Catalyzes the last step of arginine biosynthesis, the conversion of argininosuccinate into L-arginine and fumarate. This Synechocystis sp. (strain ATCC 27184 / PCC 6803 / Kazusa) protein is Argininosuccinate lyase.